Here is a 372-residue protein sequence, read N- to C-terminus: Alanine dehydrogenase (372 aa).

The substrate site is built by R15 and K75. The active-site Proton donor/acceptor is H96. NAD(+) contacts are provided by residues S134, 178–179 (TA), D198, S220, 239–240 (VL), 266–269 (IAID), R279, and 298–301 (VANM). The active-site Proton donor/acceptor is D269.

This sequence belongs to the AlaDH/PNT family. In terms of assembly, homohexamer.

The protein localises to the cytoplasm. The catalysed reaction is L-alanine + NAD(+) + H2O = pyruvate + NH4(+) + NADH + H(+). It functions in the pathway amino-acid degradation; L-alanine degradation via dehydrogenase pathway; NH(3) and pyruvate from L-alanine: step 1/1. Catalyzes the reversible reductive amination of pyruvate to L-alanine. A key factor in the assimilation of L-alanine as an energy source via the tricarboxylic acid cycle during sporulation. This Geobacillus stearothermophilus (Bacillus stearothermophilus) protein is Alanine dehydrogenase (ald).